The sequence spans 432 residues: Guanine nucleotide-binding protein subunit alpha (432 aa).

A disordered region spans residues 1–97 (MGGCMSTPEA…SKGNKDRSNQ (97 aa)). Residue Gly-2 is the site of N-myristoyl glycine attachment. Cys-4 carries S-palmitoyl cysteine lipidation. A compositionally biased stretch (low complexity) spans 21-52 (PSTSTSSRPPQASTSATATAAGAGTSAANGTA). A G-alpha domain is found at 111 to 432 (KECKILLLGS…QNALRDSGIL (322 aa)). The tract at residues 114–127 (KILLLGSGESGKST) is G1 motif. The GTP site is built by Glu-122, Ser-123, Gly-124, Lys-125, Ser-126, Thr-127, Asp-230, Leu-255, Thr-261, Gly-283, Asn-349, Lys-350, Asp-352, and Ala-404. Ser-126 contacts Mg(2+). The tract at residues 253 to 261 (DVLRARTKT) is G2 motif. Residue Thr-261 coordinates Mg(2+). The G3 motif stretch occupies residues 276 to 285 (IHMFDVGGQR). A G4 motif region spans residues 345 to 352 (ILFLNKID). The G5 motif stretch occupies residues 402 to 407 (TQATDT).

This sequence belongs to the G-alpha family. As to quaternary structure, g proteins are composed of 3 units; alpha, beta and gamma. The alpha chain contains the guanine nucleotide binding site. Mg(2+) is required as a cofactor.

Guanine nucleotide-binding proteins (G proteins) are involved as modulators or transducers in various transmembrane signaling systems. Involved in the mating pathway. This Cryptococcus neoformans var. neoformans serotype D (strain B-3501A) (Filobasidiella neoformans) protein is Guanine nucleotide-binding protein subunit alpha (GPA1).